A 139-amino-acid chain; its full sequence is MKKGTVLNSEISSVISRLGHTDTLVVCDAGLPIPNSTARIDMALTQGVPSFMQVVDVVTREMQVEAAILATEIKQQNPQLHETLLTHLEQLQQHQGNTIKISYTTHEQFKKLTADSQAVIRSGECSPYANVILCAGVTF.

Histidine 20 acts as the Proton donor in catalysis. Substrate is bound by residues aspartate 28, histidine 106, and 128 to 130; that span reads YAN.

This sequence belongs to the RbsD / FucU family. RbsD subfamily. Homodecamer.

Its subcellular location is the cytoplasm. The catalysed reaction is beta-D-ribopyranose = beta-D-ribofuranose. It functions in the pathway carbohydrate metabolism; D-ribose degradation; D-ribose 5-phosphate from beta-D-ribopyranose: step 1/2. In terms of biological role, catalyzes the interconversion of beta-pyran and beta-furan forms of D-ribose. The chain is D-ribose pyranase from Salmonella choleraesuis (strain SC-B67).